The sequence spans 459 residues: MMPLAVLHVKRLQPELITPAKPTPQETKFLSDIDDQEFLRFQVPIIMCYKDNPSLNKNRNPVKVIREALSRALVYYYPLAGRLREGPNRKLVVDCNGEGILFIEASADVTLEQLGDKILPPCPLLEEFLFNFPGSDGIIGCPLVLVQVTCLTCGGFILALRLNHTMCDAAGLLLFLTAIAEMARGAHAPSILPVWERELLFARDPPRITCAHHEYEDVIGHSDGSYASSNQSNMVQRSFYFGAKEMRVLRKQIPPHLISTCSTFDLITACLWKCRTLALNINPKEAVRVSCIVNARGKHNNVRLPLGYYGNAFAFPAAISKAEPLCKNPLGYALELVKKAKATMNEEYLRSVADLLVLRGRPQYSSTGSYLIVSDNTRAGFGDVNFGWGQPVFAGPVKALDLISFYVQHKNNAEDGILVPMCLPSSAMERFQQELERITQEPKEDICNNLRSTRIMSMM.

Active-site proton acceptor residues include His164 and Asn385.

Belongs to the plant acyltransferase family. In terms of tissue distribution, highly expressed in the cortex and skin of ripe fruit.

The enzyme catalyses butan-1-ol + acetyl-CoA = butyl acetate + CoA. It catalyses the reaction butan-1-ol + butanoyl-CoA = butyl butanoate + CoA. The catalysed reaction is butan-1-ol + hexanoyl-CoA = butyl hexanoate + CoA. It carries out the reaction hexan-1-ol + butanoyl-CoA = hexyl butanoate + CoA. The enzyme catalyses hexan-1-ol + acetyl-CoA = hexyl acetate + CoA. It catalyses the reaction 2-methylbutan-1-ol + butanoyl-CoA = 2-methylbutyl butanoate + CoA. The catalysed reaction is ethanol + butanoyl-CoA = ethyl butanoate + CoA. It carries out the reaction hexanoyl-CoA + ethanol = ethyl hexanoate + CoA. In terms of biological role, involved in the biosynthesis of volatile esters which confer ripe apple fruit flavor. Alcohol acyl transferase that can use a wide range of alcohols as substrate, including 2-methylbutanol, hexanol and ethanol, to produce esters such as butyl butanoate, butyl hexanoate, hexyl butanoate, ethyl butanoate and ethyl hexanoate and, to some extent, 2-methylbutyl acetate (2MBA), butyl acetate, hexyl acetate and 2-methylbutyl butanoate (2MBB). This is Alcohol acyl transferase 1 allele GSa from Malus domestica (Apple).